Consider the following 116-residue polypeptide: Ribosome-binding factor A (116 aa).

The protein belongs to the RbfA family. As to quaternary structure, monomer. Binds 30S ribosomal subunits, but not 50S ribosomal subunits or 70S ribosomes.

The protein resides in the cytoplasm. In terms of biological role, one of several proteins that assist in the late maturation steps of the functional core of the 30S ribosomal subunit. Associates with free 30S ribosomal subunits (but not with 30S subunits that are part of 70S ribosomes or polysomes). Required for efficient processing of 16S rRNA. May interact with the 5'-terminal helix region of 16S rRNA. The sequence is that of Ribosome-binding factor A from Halalkalibacterium halodurans (strain ATCC BAA-125 / DSM 18197 / FERM 7344 / JCM 9153 / C-125) (Bacillus halodurans).